Here is a 127-residue protein sequence, read N- to C-terminus: uncharacterized protein (127 aa).

Transmembrane regions (helical) follow at residues 48-68 and 83-103; these read LYSL…PLSI and VFLF…CLID.

The protein resides in the membrane. This is an uncharacterized protein from Saccharomyces cerevisiae (strain ATCC 204508 / S288c) (Baker's yeast).